Consider the following 131-residue polypeptide: Large ribosomal subunit protein bL17 (131 aa).

This sequence belongs to the bacterial ribosomal protein bL17 family. Part of the 50S ribosomal subunit. Contacts protein L32.

The polypeptide is Large ribosomal subunit protein bL17 (Chromobacterium violaceum (strain ATCC 12472 / DSM 30191 / JCM 1249 / CCUG 213 / NBRC 12614 / NCIMB 9131 / NCTC 9757 / MK)).